The primary structure comprises 352 residues: Protein RecA (352 aa).

Position 65–72 (65–72) interacts with ATP; it reads GPESSGKT. A disordered region spans residues 332–352; the sequence is EEVEKADVKKDAKKDAAEALK. Positions 333-352 are enriched in basic and acidic residues; it reads EVEKADVKKDAKKDAAEALK.

This sequence belongs to the RecA family.

The protein localises to the cytoplasm. Functionally, can catalyze the hydrolysis of ATP in the presence of single-stranded DNA, the ATP-dependent uptake of single-stranded DNA by duplex DNA, and the ATP-dependent hybridization of homologous single-stranded DNAs. It interacts with LexA causing its activation and leading to its autocatalytic cleavage. The protein is Protein RecA of Photobacterium profundum (strain SS9).